The sequence spans 423 residues: SH2 domain-containing adapter protein F (423 aa).

Disordered regions lie at residues methionine 1 to arginine 87, aspartate 110 to lysine 208, and aspartate 225 to threonine 312. Over residues glutamate 192–glutamine 203 the composition is skewed to acidic residues. Tyrosine 201 carries the phosphotyrosine modification. The region spanning tryptophan 323–valine 418 is the SH2 domain.

Interacts with phosphorylated 'Tyr-720' of PDGFRA via its SH2 domain. May become phosphorylated upon binding to PDGFRA. As to expression, expressed in skeletal muscle, brain, liver, prostate, testis, ovary, small intestine and colon.

Its function is as follows. Adapter protein which may play a role in the regulation of apoptosis in response to PDGF. The polypeptide is SH2 domain-containing adapter protein F (Homo sapiens (Human)).